Consider the following 326-residue polypeptide: Eukaryotic translation initiation factor 3 subunit I (326 aa).

WD repeat units lie at residues 8–47 (GHER…RLGT), 50–89 (GHQG…VIAS), 145–184 (MTES…KVVD), 188–227 (DHSA…CLKT), and 285–326 (GHFG…NIFE).

This sequence belongs to the eIF-3 subunit I family. Component of the eukaryotic translation initiation factor 3 (eIF-3) complex. The eIF-3 complex interacts with pix.

The protein localises to the cytoplasm. In terms of biological role, component of the eukaryotic translation initiation factor 3 (eIF-3) complex, which is involved in protein synthesis of a specialized repertoire of mRNAs and, together with other initiation factors, stimulates binding of mRNA and methionyl-tRNAi to the 40S ribosome. The eIF-3 complex specifically targets and initiates translation of a subset of mRNAs involved in cell proliferation. This chain is Eukaryotic translation initiation factor 3 subunit I, found in Drosophila simulans (Fruit fly).